A 172-amino-acid chain; its full sequence is R-phycocyanin-2 beta chain (172 aa).

Position 72 is an N4-methylasparagine (Asn-72). (2R,3E)-phycocyanobilin is bound at residue Cys-82. Cys-153 provides a ligand contact to (2R,3E)-phycoerythrobilin.

Belongs to the phycobiliprotein family. In terms of assembly, heterodimer of an alpha and a beta chain. Post-translationally, contains two covalently linked bilin chromophores.

The protein resides in the cellular thylakoid membrane. Its function is as follows. Light-harvesting photosynthetic bile pigment-protein from the phycobiliprotein complex. The polypeptide is R-phycocyanin-2 beta chain (rpcB) (Synechococcus sp. (strain WH8020)).